We begin with the raw amino-acid sequence, 423 residues long: Gamma-glutamyl phosphate reductase (423 aa).

The protein belongs to the gamma-glutamyl phosphate reductase family.

Its subcellular location is the cytoplasm. The catalysed reaction is L-glutamate 5-semialdehyde + phosphate + NADP(+) = L-glutamyl 5-phosphate + NADPH + H(+). Its pathway is amino-acid biosynthesis; L-proline biosynthesis; L-glutamate 5-semialdehyde from L-glutamate: step 2/2. Functionally, catalyzes the NADPH-dependent reduction of L-glutamate 5-phosphate into L-glutamate 5-semialdehyde and phosphate. The product spontaneously undergoes cyclization to form 1-pyrroline-5-carboxylate. This Burkholderia lata (strain ATCC 17760 / DSM 23089 / LMG 22485 / NCIMB 9086 / R18194 / 383) protein is Gamma-glutamyl phosphate reductase.